A 146-amino-acid polypeptide reads, in one-letter code: Ribosome maturation factor RimP (146 aa).

It belongs to the RimP family.

The protein resides in the cytoplasm. In terms of biological role, required for maturation of 30S ribosomal subunits. This Helicobacter pylori (strain ATCC 700392 / 26695) (Campylobacter pylori) protein is Ribosome maturation factor RimP.